Here is a 197-residue protein sequence, read N- to C-terminus: uncharacterized protein (197 aa).

Helical transmembrane passes span 5–23 (LNLLIFFIAALLIALGLRF), 27–46 (ISFAGLILLLAVVPALMLRF), 55–77 (VIAGIFVLGLALNALIGVALAYT), 87–109 (LSLLPLTLVLTANVFATSLVIRI), 116–138 (VFAFYFWFLISVGLAFLFLLPTG), and 153–174 (FVEFPILYSELALIPSAFCLVF).

It is found in the cell membrane. This is an uncharacterized protein from Archaeoglobus fulgidus (strain ATCC 49558 / DSM 4304 / JCM 9628 / NBRC 100126 / VC-16).